The following is a 475-amino-acid chain: Aspartyl/glutamyl-tRNA(Asn/Gln) amidotransferase subunit B (475 aa).

This sequence belongs to the GatB/GatE family. GatB subfamily. Heterotrimer of A, B and C subunits.

The catalysed reaction is L-glutamyl-tRNA(Gln) + L-glutamine + ATP + H2O = L-glutaminyl-tRNA(Gln) + L-glutamate + ADP + phosphate + H(+). The enzyme catalyses L-aspartyl-tRNA(Asn) + L-glutamine + ATP + H2O = L-asparaginyl-tRNA(Asn) + L-glutamate + ADP + phosphate + 2 H(+). Its function is as follows. Allows the formation of correctly charged Asn-tRNA(Asn) or Gln-tRNA(Gln) through the transamidation of misacylated Asp-tRNA(Asn) or Glu-tRNA(Gln) in organisms which lack either or both of asparaginyl-tRNA or glutaminyl-tRNA synthetases. The reaction takes place in the presence of glutamine and ATP through an activated phospho-Asp-tRNA(Asn) or phospho-Glu-tRNA(Gln). The polypeptide is Aspartyl/glutamyl-tRNA(Asn/Gln) amidotransferase subunit B (Helicobacter pylori (strain HPAG1)).